The primary structure comprises 652 residues: Pesticidal crystal protein Cry3Bb (652 aa).

The segment covering 1–12 (MNPNNRSEHDTI) has biased composition (basic and acidic residues). Disordered stretches follow at residues 1–33 (MNPNNRSEHDTIKVTPNSELQTNHNQYPLADNP) and 433–465 (KNETSTQTYDSKRNNGHVSAQDSIDQLPPETTD). Residues 14–33 (VTPNSELQTNHNQYPLADNP) are compositionally biased toward polar residues.

This sequence belongs to the delta endotoxin family. As to quaternary structure, monomer.

In terms of biological role, promotes colloidosmotic lysis by binding to the midgut epithelial cells of Coleoptera. Has moderate level of toxicity to southern corn rootworm. This is Pesticidal crystal protein Cry3Bb (cry3Bb) from Bacillus thuringiensis.